The primary structure comprises 444 residues: Maturase K (444 aa).

It belongs to the intron maturase 2 family. MatK subfamily.

It is found in the plastid. It localises to the chloroplast. Usually encoded in the trnK tRNA gene intron. Probably assists in splicing its own and other chloroplast group II introns. In Chamaecyparis lawsoniana (Lawson false cypress), this protein is Maturase K.